Reading from the N-terminus, the 426-residue chain is Glutamate-1-semialdehyde 2,1-aminomutase (426 aa).

K268 carries the post-translational modification N6-(pyridoxal phosphate)lysine.

It belongs to the class-III pyridoxal-phosphate-dependent aminotransferase family. HemL subfamily. Requires pyridoxal 5'-phosphate as cofactor.

The protein localises to the cytoplasm. The enzyme catalyses (S)-4-amino-5-oxopentanoate = 5-aminolevulinate. Its pathway is porphyrin-containing compound metabolism; protoporphyrin-IX biosynthesis; 5-aminolevulinate from L-glutamyl-tRNA(Glu): step 2/2. This Saccharolobus islandicus (strain M.16.27) (Sulfolobus islandicus) protein is Glutamate-1-semialdehyde 2,1-aminomutase.